The primary structure comprises 422 residues: Tyrosine--tRNA ligase (422 aa).

Residue Y37 coordinates L-tyrosine. The short motif at 42 to 51 (PTEESLHIGH) is the 'HIGH' region element. L-tyrosine contacts are provided by Y175 and Q179. The 'KMSKS' region signature appears at 235–239 (KFGKT). Residue K238 participates in ATP binding. Residues 357-414 (KDLQEALVLTSLAQSRTQAKNMIISNSISINTEKIRKNHIFHEKDKLFGKFTLLSRGK) form the S4 RNA-binding domain.

Belongs to the class-I aminoacyl-tRNA synthetase family. TyrS type 1 subfamily. Homodimer.

Its subcellular location is the cytoplasm. It catalyses the reaction tRNA(Tyr) + L-tyrosine + ATP = L-tyrosyl-tRNA(Tyr) + AMP + diphosphate + H(+). Its function is as follows. Catalyzes the attachment of tyrosine to tRNA(Tyr) in a two-step reaction: tyrosine is first activated by ATP to form Tyr-AMP and then transferred to the acceptor end of tRNA(Tyr). This Buchnera aphidicola subsp. Acyrthosiphon pisum (strain 5A) protein is Tyrosine--tRNA ligase.